The following is a 368-amino-acid chain: Quinolinate synthase (368 aa).

Residues His46 and Ser63 each coordinate iminosuccinate. Cys110 contacts [4Fe-4S] cluster. Residues 141-143 (YVN) and Ser162 contribute to the iminosuccinate site. Position 230 (Cys230) interacts with [4Fe-4S] cluster. Iminosuccinate contacts are provided by residues 256–258 (HPE) and Thr273. Position 320 (Cys320) interacts with [4Fe-4S] cluster.

Belongs to the quinolinate synthase family. Type 3 subfamily. Requires [4Fe-4S] cluster as cofactor.

It is found in the cytoplasm. The catalysed reaction is iminosuccinate + dihydroxyacetone phosphate = quinolinate + phosphate + 2 H2O + H(+). It functions in the pathway cofactor biosynthesis; NAD(+) biosynthesis; quinolinate from iminoaspartate: step 1/1. Its function is as follows. Catalyzes the condensation of iminoaspartate with dihydroxyacetone phosphate to form quinolinate. This is Quinolinate synthase from Bacillus cereus (strain ATCC 14579 / DSM 31 / CCUG 7414 / JCM 2152 / NBRC 15305 / NCIMB 9373 / NCTC 2599 / NRRL B-3711).